The primary structure comprises 177 residues: Thymidine kinase (177 aa).

11–18 is an ATP binding site; that stretch reads GPMFSGKS. Residue glutamate 83 is the Proton acceptor of the active site. Substrate is bound at residue phenylalanine 113. Zn(2+)-binding residues include cysteine 138 and cysteine 141. Position 157–161 (157–161) interacts with substrate; it reads IEIIG. The Zn(2+) site is built by cysteine 170 and cysteine 173.

The protein belongs to the thymidine kinase family. As to quaternary structure, homotetramer. Two molecules of substrate bind to each enzyme tetramer.

It carries out the reaction thymidine + ATP = dTMP + ADP + H(+). Its function is as follows. Phosphorylates thymidine and thymidine analogs, such as azidothymidine (AZT). Part of the salvage pathway for pyrimidine deoxyribonucleotide synthesis. In Variola virus (isolate Human/India/Ind3/1967) (VARV), this protein is Thymidine kinase (OPG101).